Consider the following 447-residue polypeptide: MGKKYSMRRRIWQAVIEIIIGTCLLILLLLGLTFFLRQIGQISGSETIRLSLDSDNLTISDIERDMKHYPYDYIIFDNDTSKILGGHYVKSDVPSFVASKQSSHNITEGEITYTYSSNKHFSVVLRQNSMPEFTNHTLRSISYNQFTYLFFFLGEIILIIFSVYHLIREFSKNFQAVQKIALKMGEITTFPEQEESKIIEFDQVLNNLYSKSKELAFLIEAERHEKHDLSFQVAALSHDVKTPLTVLKGNIELLEMTEVNEQQADFIESMKNSLTVFDKYFNTMISYTKLLNDENDYKATISLEDFLIDLSVELEELSTTYQVDYQLVKKTDLTTFYGNTLALSRALINIFVNACQYAKEGEKIVSLSIYDDEKYLYFEIWNNGHPFSEQAKKNAGKLFFTEDTGRSGKHYGIGLSFAQGVALKHQGNLILSNPQKGGAEVILKIKK.

A run of 2 helical transmembrane segments spans residues 15–35 and 147–167; these read VIEI…LTFF and TYLF…YHLI. A Histidine kinase domain is found at 235–447; the sequence is ALSHDVKTPL…GAEVILKIKK (213 aa). Residue H238 is modified to Phosphohistidine; by autocatalysis.

The protein localises to the cell membrane. It carries out the reaction ATP + protein L-histidine = ADP + protein N-phospho-L-histidine.. Member of the two-component regulatory system NisK/NisR involved in the regulation of the biosynthesis of lantibiotic nisin. NisK may function as a membrane-associated protein kinase that phosphorylates NisR in response to environmental signals. The chain is Nisin biosynthesis sensor protein NisK (nisK) from Lactococcus lactis subsp. lactis (Streptococcus lactis).